Consider the following 386-residue polypeptide: Formate-dependent phosphoribosylglycinamide formyltransferase (386 aa).

N(1)-(5-phospho-beta-D-ribosyl)glycinamide is bound by residues 15–16 (EL) and Glu-75. ATP is bound by residues Arg-107, Lys-148, 153-158 (SSGKGQ), 188-191 (EQFI), and Glu-196. Positions 112 to 301 (ALAVQQLNLQ…EFELHLRAIV (190 aa)) constitute an ATP-grasp domain. Residues Glu-260 and Glu-272 each coordinate Mg(2+). N(1)-(5-phospho-beta-D-ribosyl)glycinamide contacts are provided by residues Asp-279, Lys-349, and 356–357 (RR).

It belongs to the PurK/PurT family. As to quaternary structure, homodimer.

It catalyses the reaction N(1)-(5-phospho-beta-D-ribosyl)glycinamide + formate + ATP = N(2)-formyl-N(1)-(5-phospho-beta-D-ribosyl)glycinamide + ADP + phosphate + H(+). Its pathway is purine metabolism; IMP biosynthesis via de novo pathway; N(2)-formyl-N(1)-(5-phospho-D-ribosyl)glycinamide from N(1)-(5-phospho-D-ribosyl)glycinamide (formate route): step 1/1. In terms of biological role, involved in the de novo purine biosynthesis. Catalyzes the transfer of formate to 5-phospho-ribosyl-glycinamide (GAR), producing 5-phospho-ribosyl-N-formylglycinamide (FGAR). Formate is provided by PurU via hydrolysis of 10-formyl-tetrahydrofolate. The protein is Formate-dependent phosphoribosylglycinamide formyltransferase of Francisella tularensis subsp. holarctica (strain LVS).